The chain runs to 306 residues: Phenylcoumaran benzylic ether reductase POP1 (306 aa).

NADP(+) is bound by residues 9-15, Arg34, and Lys43; that span reads GGTGYIG. Residue Lys131 is the Proton acceptor of the active site. Residue Arg135 coordinates NADP(+).

Belongs to the NmrA-type oxidoreductase family. Isoflavone reductase subfamily.

It catalyses the reaction (-)-dehydrodiconiferyl alcohol + NADPH + H(+) = (S)-isodihydrodehydrodiconiferyl alcohol + NADP(+). The catalysed reaction is (+)-dehydrodiconiferyl alcohol + NADPH + H(+) = (R)-isodihydrodehydrodiconiferyl alcohol + NADP(+). The enzyme catalyses (2R,3S)-dihydrodehydrodiconiferyl alcohol + NADPH + H(+) = (S)-tetrahydrodehydrodiconiferyl alcohol + NADP(+). It carries out the reaction (2S,3R)-dihydrodehydrodiconiferyl alcohol + NADPH + H(+) = (R)-tetrahydrodehydrodiconiferyl alcohol + NADP(+). Oxidoreductase involved in lignan biosynthesis. Catalyzes the NADPH-dependent reduction of phenylcoumaran benzylic ethers. Converts dehydrodiconiferyl alcohol (DDC) to isodihydrodehydrodiconiferyl alcohol (IDDDC), and dihydrodehydrodiconiferyl alcohol (DDDC) to tetrahydrodehydrodiconiferyl alcohol (TDDC). The polypeptide is Phenylcoumaran benzylic ether reductase POP1 (Populus trichocarpa (Western balsam poplar)).